The chain runs to 399 residues: S-adenosylmethionine synthase (399 aa).

Residue His17 coordinates ATP. Asp19 is a Mg(2+) binding site. Glu45 is a binding site for K(+). L-methionine is bound by residues Glu58 and Gln101. The flexible loop stretch occupies residues Gln101–Gln111. ATP contacts are provided by residues Asp177–Lys179, Arg244–Phe245, Asp253, Arg259–Lys260, Ala276, and Lys280. An L-methionine-binding site is contributed by Asp253. Lys284 is an L-methionine binding site.

Belongs to the AdoMet synthase family. In terms of assembly, homotetramer; dimer of dimers. Mg(2+) is required as a cofactor. Requires K(+) as cofactor.

It is found in the cytoplasm. It carries out the reaction L-methionine + ATP + H2O = S-adenosyl-L-methionine + phosphate + diphosphate. Its pathway is amino-acid biosynthesis; S-adenosyl-L-methionine biosynthesis; S-adenosyl-L-methionine from L-methionine: step 1/1. Its function is as follows. Catalyzes the formation of S-adenosylmethionine (AdoMet) from methionine and ATP. The overall synthetic reaction is composed of two sequential steps, AdoMet formation and the subsequent tripolyphosphate hydrolysis which occurs prior to release of AdoMet from the enzyme. This is S-adenosylmethionine synthase from Bacillus thuringiensis subsp. konkukian (strain 97-27).